We begin with the raw amino-acid sequence, 310 residues long: HPr kinase/phosphorylase (310 aa).

Catalysis depends on residues His138 and Lys159. 153–160 (GDSGIGKS) serves as a coordination point for ATP. Mg(2+) is bound at residue Ser160. Asp177 acts as the Proton acceptor; for phosphorylation activity. Proton donor; for dephosphorylation activity in catalysis. The interval 201–210 (LEIRGVGIID) is important for the catalytic mechanism of both phosphorylation and dephosphorylation. Residue Glu202 participates in Mg(2+) binding. Arg243 is an active-site residue. Positions 264–269 (PVKTGR) are important for the catalytic mechanism of dephosphorylation.

The protein belongs to the HPrK/P family. Homohexamer. The cofactor is Mg(2+).

The catalysed reaction is [HPr protein]-L-serine + ATP = [HPr protein]-O-phospho-L-serine + ADP + H(+). It carries out the reaction [HPr protein]-O-phospho-L-serine + phosphate + H(+) = [HPr protein]-L-serine + diphosphate. Functionally, catalyzes the ATP- as well as the pyrophosphate-dependent phosphorylation of a specific serine residue in HPr, a phosphocarrier protein of the phosphoenolpyruvate-dependent sugar phosphotransferase system (PTS). HprK/P also catalyzes the pyrophosphate-producing, inorganic phosphate-dependent dephosphorylation (phosphorolysis) of seryl-phosphorylated HPr (P-Ser-HPr). The two antagonistic activities of HprK/P are regulated by several intracellular metabolites, which change their concentration in response to the absence or presence of rapidly metabolisable carbon sources (glucose, fructose, etc.) in the growth medium. Therefore, by controlling the phosphorylation state of HPr, HPrK/P is a sensor enzyme that plays a major role in the regulation of carbon metabolism and sugar transport: it mediates carbon catabolite repression (CCR), and regulates PTS-catalyzed carbohydrate uptake and inducer exclusion. This chain is HPr kinase/phosphorylase (hprK), found in Streptococcus pyogenes serotype M1.